Consider the following 276-residue polypeptide: Elongation factor Ts, mitochondrial (276 aa).

The protein belongs to the EF-Ts family.

It localises to the mitochondrion. Its function is as follows. Associates with the EF-Tu.GDP complex and induces the exchange of GDP to GTP. It remains bound to the aminoacyl-tRNA.EF-Tu.GTP complex up to the GTP hydrolysis stage on the ribosome. This chain is Elongation factor Ts, mitochondrial, found in Leishmania braziliensis.